Here is a 100-residue protein sequence, read N- to C-terminus: Small ribosomal subunit protein uS14c (100 aa).

The protein belongs to the universal ribosomal protein uS14 family. As to quaternary structure, part of the 30S ribosomal subunit.

It is found in the plastid. It localises to the chloroplast. Its function is as follows. Binds 16S rRNA, required for the assembly of 30S particles. The protein is Small ribosomal subunit protein uS14c of Ceratophyllum demersum (Rigid hornwort).